Consider the following 238-residue polypeptide: Purine nucleoside phosphorylase DeoD-type (238 aa).

His-4 lines the a purine D-ribonucleoside pocket. Phosphate contacts are provided by residues Gly-20, Arg-24, Arg-43, and 87 to 90 (RVGS). Residues 179–181 (EME) and 203–204 (SD) each bind a purine D-ribonucleoside. Asp-204 (proton donor) is an active-site residue.

The protein belongs to the PNP/UDP phosphorylase family. As to quaternary structure, homohexamer; trimer of homodimers.

The enzyme catalyses a purine D-ribonucleoside + phosphate = a purine nucleobase + alpha-D-ribose 1-phosphate. It catalyses the reaction a purine 2'-deoxy-D-ribonucleoside + phosphate = a purine nucleobase + 2-deoxy-alpha-D-ribose 1-phosphate. Its function is as follows. Catalyzes the reversible phosphorolytic breakdown of the N-glycosidic bond in the beta-(deoxy)ribonucleoside molecules, with the formation of the corresponding free purine bases and pentose-1-phosphate. This chain is Purine nucleoside phosphorylase DeoD-type, found in Haemophilus influenzae (strain 86-028NP).